Reading from the N-terminus, the 984-residue chain is E3 ubiquitin-protein ligase BRE1A (984 aa).

The tract at residues 1 to 34 is disordered; sequence MSGAGNKRAAGEPGPSAPPEKKAGVEDSGTTVET. Residues 43 to 90 are a coiled coil; that stretch reads TEELDIRTLQTKNRKLAEMLDQRQAIEDELREHIEKLERRQATDDASL. Residues 128 to 150 are disordered; the sequence is VVPEPEPDSDSNQERKDERERGE. Basic and acidic residues predominate over residues 139–150; sequence NQERKDERERGE. 2 coiled-coil regions span residues 236 to 378 and 429 to 907; these read ADTL…VKET and SLHK…TTKK. The tract at residues 506–632 is disordered; that stretch reads SDLSKIRSRS…KHEDGRKKEA (127 aa). Over residues 514–526 the composition is skewed to polar residues; it reads RSGSALLQSQSST. Composition is skewed to basic and acidic residues over residues 527–540 and 558–632; these read EDTK…KQEP and SEVK…KKEA. The segment at 931–970 adopts an RING-type zinc-finger fold; it reads CPCCNMRKKDAVLTKCFHVFCFECVKTRYDTRQRKCPKCN.

Belongs to the BRE1 family. In terms of assembly, component of the RNF20/40 complex (also known as BRE1 complex).

It is found in the nucleus. The catalysed reaction is S-ubiquitinyl-[E2 ubiquitin-conjugating enzyme]-L-cysteine + [acceptor protein]-L-lysine = [E2 ubiquitin-conjugating enzyme]-L-cysteine + N(6)-ubiquitinyl-[acceptor protein]-L-lysine.. Its pathway is protein modification; protein ubiquitination. Component of the RNF20/40 E3 ubiquitin-protein ligase complex that mediates monoubiquitination of 'Lys-120' of histone H2B (H2BK120ub1). H2BK120ub1 gives a specific tag for epigenetic transcriptional activation and is also prerequisite for histone H3 'Lys-4' and 'Lys-79' methylation (H3K4me and H3K79me, respectively). The sequence is that of E3 ubiquitin-protein ligase BRE1A (RNF20) from Gallus gallus (Chicken).